The chain runs to 396 residues: NADH-quinone oxidoreductase subunit D (396 aa).

The protein belongs to the complex I 49 kDa subunit family. In terms of assembly, NDH-1 is composed of 14 different subunits. Subunits NuoB, C, D, E, F, and G constitute the peripheral sector of the complex.

The protein localises to the cell inner membrane. It catalyses the reaction a quinone + NADH + 5 H(+)(in) = a quinol + NAD(+) + 4 H(+)(out). Functionally, NDH-1 shuttles electrons from NADH, via FMN and iron-sulfur (Fe-S) centers, to quinones in the respiratory chain. The immediate electron acceptor for the enzyme in this species is believed to be ubiquinone. Couples the redox reaction to proton translocation (for every two electrons transferred, four hydrogen ions are translocated across the cytoplasmic membrane), and thus conserves the redox energy in a proton gradient. The sequence is that of NADH-quinone oxidoreductase subunit D from Orientia tsutsugamushi (strain Boryong) (Rickettsia tsutsugamushi).